Consider the following 406-residue polypeptide: tRNA-specific 2-thiouridylase MnmA (406 aa).

ATP is bound by residues 42 to 49 and L68; that span reads GLSGGVDS. The active-site Nucleophile is the C129. C129 and C237 form a disulfide bridge. G154 is a binding site for ATP. An interaction with tRNA region spans residues 187–189; it reads KDQ. C237 acts as the Cysteine persulfide intermediate in catalysis. Positions 342-343 are interaction with tRNA; it reads RY.

The protein belongs to the MnmA/TRMU family.

It is found in the cytoplasm. The catalysed reaction is S-sulfanyl-L-cysteinyl-[protein] + uridine(34) in tRNA + AH2 + ATP = 2-thiouridine(34) in tRNA + L-cysteinyl-[protein] + A + AMP + diphosphate + H(+). Its function is as follows. Catalyzes the 2-thiolation of uridine at the wobble position (U34) of tRNA, leading to the formation of s(2)U34. The sequence is that of tRNA-specific 2-thiouridylase MnmA from Prochlorococcus marinus (strain MIT 9211).